A 236-amino-acid polypeptide reads, in one-letter code: DNA repair protein RecO (236 aa).

It belongs to the RecO family.

Its function is as follows. Involved in DNA repair and RecF pathway recombination. The protein is DNA repair protein RecO of Stutzerimonas stutzeri (strain A1501) (Pseudomonas stutzeri).